A 126-amino-acid chain; its full sequence is Cell cycle protein GpsB (126 aa).

Positions 35 to 72 (LDLVIKDYQTYQENIDRLTADNTRLFNKVEELNRQLSA) form a coiled coil.

The protein belongs to the GpsB family. In terms of assembly, forms polymers through the coiled coil domains. Interacts with PBP1, MreC and EzrA.

It localises to the cytoplasm. Functionally, divisome component that associates with the complex late in its assembly, after the Z-ring is formed, and is dependent on DivIC and PBP2B for its recruitment to the divisome. Together with EzrA, is a key component of the system that regulates PBP1 localization during cell cycle progression. Its main role could be the removal of PBP1 from the cell pole after pole maturation is completed. Also contributes to the recruitment of PBP1 to the division complex. Not essential for septum formation. In Latilactobacillus sakei subsp. sakei (strain 23K) (Lactobacillus sakei subsp. sakei), this protein is Cell cycle protein GpsB.